We begin with the raw amino-acid sequence, 326 residues long: Lipoyl synthase (326 aa).

Residues C74, C79, C85, C100, C104, C107, and S314 each coordinate [4Fe-4S] cluster. One can recognise a Radical SAM core domain in the interval 85–303; the sequence is CFGRGTATFM…EEEAYKMGFS (219 aa).

It belongs to the radical SAM superfamily. Lipoyl synthase family. [4Fe-4S] cluster is required as a cofactor.

It localises to the cytoplasm. The catalysed reaction is [[Fe-S] cluster scaffold protein carrying a second [4Fe-4S](2+) cluster] + N(6)-octanoyl-L-lysyl-[protein] + 2 oxidized [2Fe-2S]-[ferredoxin] + 2 S-adenosyl-L-methionine + 4 H(+) = [[Fe-S] cluster scaffold protein] + N(6)-[(R)-dihydrolipoyl]-L-lysyl-[protein] + 4 Fe(3+) + 2 hydrogen sulfide + 2 5'-deoxyadenosine + 2 L-methionine + 2 reduced [2Fe-2S]-[ferredoxin]. It functions in the pathway protein modification; protein lipoylation via endogenous pathway; protein N(6)-(lipoyl)lysine from octanoyl-[acyl-carrier-protein]: step 2/2. Functionally, catalyzes the radical-mediated insertion of two sulfur atoms into the C-6 and C-8 positions of the octanoyl moiety bound to the lipoyl domains of lipoate-dependent enzymes, thereby converting the octanoylated domains into lipoylated derivatives. This Acidovorax ebreus (strain TPSY) (Diaphorobacter sp. (strain TPSY)) protein is Lipoyl synthase.